Consider the following 160-residue polypeptide: Cyclic pyranopterin monophosphate synthase (160 aa).

Residues 77-79 and 114-115 each bind substrate; these read LCH and ME. Asp129 is an active-site residue.

This sequence belongs to the MoaC family. As to quaternary structure, homohexamer; trimer of dimers.

The catalysed reaction is (8S)-3',8-cyclo-7,8-dihydroguanosine 5'-triphosphate = cyclic pyranopterin phosphate + diphosphate. The protein operates within cofactor biosynthesis; molybdopterin biosynthesis. Catalyzes the conversion of (8S)-3',8-cyclo-7,8-dihydroguanosine 5'-triphosphate to cyclic pyranopterin monophosphate (cPMP). This is Cyclic pyranopterin monophosphate synthase from Alcanivorax borkumensis (strain ATCC 700651 / DSM 11573 / NCIMB 13689 / SK2).